Consider the following 521-residue polypeptide: Adenosylhomocysteinase-like 1 (521 aa).

Positions methionine 1 to serine 92 are disordered. Residues arginine 54–serine 73 show a composition bias toward low complexity. Substrate is bound by residues aspartate 220 and glutamate 245. Serine 246–threonine 248 is an NAD(+) binding site. Substrate-binding residues include lysine 275 and aspartate 279. NAD(+) contacts are provided by residues glycine 311–glycine 316, glutamate 332, methionine 388–histidine 390, asparagine 435, lysine 515, lysine 515–tyrosine 519, and tyrosine 519.

It belongs to the adenosylhomocysteinase family. As to quaternary structure, interacts with Ahcy; the interaction may negatively regulate Ahcy catalytic activity. NAD(+) serves as cofactor.

Functionally, might play a role in the regulation of methionine metabolism possibly by binding and inactivating Ahcy. This chain is Adenosylhomocysteinase-like 1, found in Drosophila melanogaster (Fruit fly).